A 251-amino-acid polypeptide reads, in one-letter code: Ubiquinone/menaquinone biosynthesis C-methyltransferase UbiE (251 aa).

Residues Thr-74, Asp-95, 123-124 (NA), and Ser-140 each bind S-adenosyl-L-methionine.

Belongs to the class I-like SAM-binding methyltransferase superfamily. MenG/UbiE family.

It catalyses the reaction a 2-demethylmenaquinol + S-adenosyl-L-methionine = a menaquinol + S-adenosyl-L-homocysteine + H(+). It carries out the reaction a 2-methoxy-6-(all-trans-polyprenyl)benzene-1,4-diol + S-adenosyl-L-methionine = a 5-methoxy-2-methyl-3-(all-trans-polyprenyl)benzene-1,4-diol + S-adenosyl-L-homocysteine + H(+). It participates in quinol/quinone metabolism; menaquinone biosynthesis; menaquinol from 1,4-dihydroxy-2-naphthoate: step 2/2. It functions in the pathway cofactor biosynthesis; ubiquinone biosynthesis. In terms of biological role, methyltransferase required for the conversion of demethylmenaquinol (DMKH2) to menaquinol (MKH2) and the conversion of 2-polyprenyl-6-methoxy-1,4-benzoquinol (DDMQH2) to 2-polyprenyl-3-methyl-6-methoxy-1,4-benzoquinol (DMQH2). This Klebsiella pneumoniae (strain 342) protein is Ubiquinone/menaquinone biosynthesis C-methyltransferase UbiE.